Reading from the N-terminus, the 86-residue chain is MFGVSTFSLKKTLRFLFFFEFFSHFRVNCYMIFDINWRKFMLCWCNPNRTTIDNLQSFTVHCIHRNRLFYKSFILQFLGRKRIILQ.

This is an uncharacterized protein from Schizosaccharomyces pombe (strain 972 / ATCC 24843) (Fission yeast).